The following is a 160-amino-acid chain: UPF0178 protein PA5247 (160 aa).

This sequence belongs to the UPF0178 family.

This is UPF0178 protein PA5247 from Pseudomonas aeruginosa (strain ATCC 15692 / DSM 22644 / CIP 104116 / JCM 14847 / LMG 12228 / 1C / PRS 101 / PAO1).